The sequence spans 399 residues: Elongation factor Tu (399 aa).

In terms of domain architecture, tr-type G spans 10 to 209 (KPHVNIGTIG…AVDDYIPTPV (200 aa)). The interval 19 to 26 (GHVDHGKT) is G1. 19–26 (GHVDHGKT) is a GTP binding site. Mg(2+) is bound at residue T26. The interval 62–66 (GITIN) is G2. The G3 stretch occupies residues 83–86 (DCPG). Residues 83 to 87 (DCPGH) and 138 to 141 (NKCD) contribute to the GTP site. A G4 region spans residues 138–141 (NKCD). Positions 175 to 177 (SAY) are G5.

Belongs to the TRAFAC class translation factor GTPase superfamily. Classic translation factor GTPase family. EF-Tu/EF-1A subfamily. As to quaternary structure, monomer.

The protein resides in the cytoplasm. It catalyses the reaction GTP + H2O = GDP + phosphate + H(+). Functionally, GTP hydrolase that promotes the GTP-dependent binding of aminoacyl-tRNA to the A-site of ribosomes during protein biosynthesis. This is Elongation factor Tu from Bifidobacterium longum (strain DJO10A).